Reading from the N-terminus, the 100-residue chain is NADH-quinone oxidoreductase subunit K (100 aa).

Helical transmembrane passes span 4–24, 29–49, and 60–80; these read LSYS…GIMI, LFLL…FVIV, and VMYI…LALL.

Belongs to the complex I subunit 4L family. As to quaternary structure, NDH-1 is composed of 14 different subunits. Subunits NuoA, H, J, K, L, M, N constitute the membrane sector of the complex.

It is found in the cell membrane. The enzyme catalyses a quinone + NADH + 5 H(+)(in) = a quinol + NAD(+) + 4 H(+)(out). NDH-1 shuttles electrons from NADH, via FMN and iron-sulfur (Fe-S) centers, to quinones in the respiratory chain. The immediate electron acceptor for the enzyme in this species is believed to be ubiquinone. Couples the redox reaction to proton translocation (for every two electrons transferred, four hydrogen ions are translocated across the cytoplasmic membrane), and thus conserves the redox energy in a proton gradient. In Baumannia cicadellinicola subsp. Homalodisca coagulata, this protein is NADH-quinone oxidoreductase subunit K.